A 1962-amino-acid polypeptide reads, in one-letter code: Myosin heavy chain, muscle (1962 aa).

Residues 33-82 enclose the Myosin N-terminal SH3-like domain; that stretch reads DSKKSCWIPDEKEGYLLGEIKATKGDIVSVGLQGGEVRDIKSEKVEKVNP. Positions 86–777 constitute a Myosin motor domain; it reads EKIEDMADMT…VLGQMEEFRD (692 aa). 179-186 contacts ATP; it reads GESGAGKT. Positions 656–678 are actin-binding; that stretch reads LNSLMTTLRSTQPHFVRCIIPNE. The 30-residue stretch at 780–809 folds into the IQ domain; sequence LGKIMSWMQAWARGYLSRKGFKKLQEQRVA. The stretch at 802 to 1927 forms a coiled coil; the sequence is KLQEQRVALK…KFRAKGRAGS (1126 aa). 2 disordered regions span residues 1822-1862 and 1922-1962; these read ENEL…NHER and KGRA…ENEF.

This sequence belongs to the TRAFAC class myosin-kinesin ATPase superfamily. Myosin family. As to quaternary structure, muscle myosin is a hexameric protein that consists of 2 heavy chain subunits (MHC), 2 alkali light chain subunits (MLC) and 2 regulatory light chain subunits (MLC-2). In terms of tissue distribution, expressed in larval and adult muscles. Isoforms containing exon 9a are expressed in indirect flight muscles, exons 9a and 9b are expressed in jump muscles, exons 9b and 9c are expressed in other larval and adult muscles.

Its subcellular location is the cytoplasm. The protein resides in the myofibril. Functionally, muscle contraction. This chain is Myosin heavy chain, muscle (Mhc), found in Drosophila melanogaster (Fruit fly).